A 478-amino-acid polypeptide reads, in one-letter code: Probable serine carboxypeptidase CPVL (478 aa).

The first 22 residues, 1 to 22 (MVRAQWKVIILLILLMVIPSDG), serve as a signal peptide directing secretion. N-linked (GlcNAc...) asparagine glycans are attached at residues N83 and N134. Residue S206 is part of the active site. N309 and N350 each carry an N-linked (GlcNAc...) asparagine glycan. Catalysis depends on residues D390 and H450.

Belongs to the peptidase S10 family.

Functionally, may be involved in the digestion of phagocytosed particles in the lysosome, participation in an inflammatory protease cascade, and trimming of peptides for antigen presentation. The polypeptide is Probable serine carboxypeptidase CPVL (CPVL) (Rattus norvegicus (Rat)).